Here is a 213-residue protein sequence, read N- to C-terminus: Orotate phosphoribosyltransferase (213 aa).

K26 contributes to the 5-phospho-alpha-D-ribose 1-diphosphate binding site. 34–35 (FF) serves as a coordination point for orotate. 5-phospho-alpha-D-ribose 1-diphosphate is bound by residues 72 to 73 (YK), R99, K100, K103, H105, and 124 to 132 (DDVITAGTA). Positions 128 and 156 each coordinate orotate.

The protein belongs to the purine/pyrimidine phosphoribosyltransferase family. PyrE subfamily. As to quaternary structure, homodimer. Mg(2+) serves as cofactor.

It catalyses the reaction orotidine 5'-phosphate + diphosphate = orotate + 5-phospho-alpha-D-ribose 1-diphosphate. It functions in the pathway pyrimidine metabolism; UMP biosynthesis via de novo pathway; UMP from orotate: step 1/2. In terms of biological role, catalyzes the transfer of a ribosyl phosphate group from 5-phosphoribose 1-diphosphate to orotate, leading to the formation of orotidine monophosphate (OMP). This chain is Orotate phosphoribosyltransferase, found in Serratia proteamaculans (strain 568).